A 398-amino-acid polypeptide reads, in one-letter code: Acetate kinase 2 (398 aa).

A Mg(2+)-binding site is contributed by Asn-7. Lys-14 is an ATP binding site. Arg-91 contributes to the substrate binding site. The active-site Proton donor/acceptor is the Asp-148. Residues 208-212 (HLGNG), 283-285 (DFR), and 331-335 (GVGEN) each bind ATP. Glu-384 provides a ligand contact to Mg(2+).

Belongs to the acetokinase family. In terms of assembly, homodimer. The cofactor is Mg(2+). It depends on Mn(2+) as a cofactor.

It is found in the cytoplasm. The catalysed reaction is acetate + ATP = acetyl phosphate + ADP. The protein operates within metabolic intermediate biosynthesis; acetyl-CoA biosynthesis; acetyl-CoA from acetate: step 1/2. Catalyzes the formation of acetyl phosphate from acetate and ATP. Can also catalyze the reverse reaction. This is Acetate kinase 2 from Clostridium perfringens (strain 13 / Type A).